The sequence spans 756 residues: MTSASNPPAFRLETSDGDEEGSAEVNKGKNEPPPMESPFQGEDRNFSPQIKVNLNYRKGLGPSQQDPNRFDRDRLFSVVSRGVPEELTGLLEYLRRTSKYLTDSAYTEGSTGKTCLMKAVLNLQDGVNACILPLLQIDRDSGNPQPLVNAQCTDEFYRGHSALHIAIEKRSLWCVKLLVENGANVHIRACGRFFQKHQGTCFYFGELPLSLAACTKQWDVVTYLLENPHQPASLEATDSLGNTVLHALVMIADNSPENSALVIHMYDSLLQMGARLCPTVQLEDICNHQGLTPLKLAAKEGKIEIFRHILQREFSGLYQPLSRKFTEWCYGPVRVSLYDLSSVDSWEKNSVLEIIAFHCKSPHRHRMVVLEPLNKLLQEKWDRLIPRFFFNFACYLVYMIIFTIVAYHQPSLEQPAIPSSKATFGDSMLLLGHILILLGGIYLLLGQLWYFWRRRLFIWISFMDSYFEILFLVQALLTVLSQVLRFVETEWYLPLLVSSLVLGWLNLLYYTRGFQHTGIYSVMIQKVILRDLLRFLLVYLVFLFGFAVALVSLSREARSPKAPEDSNTTVTEKPTLGQEEEPVPYGGILDASLELFKFTIGMGELAFQEQLRFRGVVLLLLLAYVLLTYVLLLNMLIALMSETVNSVATDSWSIWKLQKAISVLEMENGYWWCRRKRHRAGRLLKVGTKGDGIPDERWCFRVEEVNWAAWEKTLPTLSEDPSGAGITGYKKNPTSKPGKNSASEEDHLPLQVLQSH.

Positions Met-1–Asn-45 are disordered. The required for interaction with SLC50A1 stretch occupies residues Met-1–Ile-385. At Met-1–Arg-387 the chain is on the cytoplasmic side. A phosphoserine mark is found at Ser-15 and Ser-77. ANK repeat units follow at residues Asn-68–Ser-110, Thr-111–Tyr-157, Arg-158–Tyr-203, Phe-204–Ser-239, Leu-240–His-288, and Gln-289–Ser-315. Residues Phe-388 to His-408 traverse the membrane as a helical segment. The Extracellular portion of the chain corresponds to Gln-409–Met-428. Residues Leu-429–Trp-449 form a helical membrane-spanning segment. Topologically, residues Tyr-450–Arg-455 are cytoplasmic. A helical transmembrane segment spans residues Leu-456–Leu-476. Over Leu-477–Glu-490 the chain is Extracellular. The chain crosses the membrane as a helical span at residues Trp-491–Thr-511. Residues Arg-512–Leu-532 are Cytoplasmic-facing. A helical membrane pass occupies residues Leu-533 to Leu-553. The tract at residues Ser-559–Val-583 is disordered. Asn-567 is a glycosylation site (N-linked (GlcNAc...) asparagine). Residues Thr-568–Glu-604 constitute an intramembrane region (pore-forming). The chain crosses the membrane as a helical span at residues Val-617 to Ile-637. At Ala-638–His-756 the chain is on the cytoplasmic side. The segment at Glu-719 to His-756 is disordered. Residues Asn-732–Ser-741 are compositionally biased toward polar residues. Phosphoserine is present on residues Ser-743 and Ser-755.

It belongs to the transient receptor (TC 1.A.4) family. TrpV subfamily. TRPV2 sub-subfamily. In terms of assembly, homotetramer. Interacts with a cAMP-dependent protein kinase type II regulatory subunit (PRKAR2A or PRKAR2B) and ACBD3. Interacts with SLC50A1; the interaction probably occurs intracellularly and depends on TRPV2 N-glycosylation. N-glycosylated. Post-translationally, phosphorylated by PKA. Abundantly expressed in spleen, placenta, skeleton muscle, lung and brain.

It localises to the cell membrane. The protein resides in the cytoplasm. Its subcellular location is the melanosome. It catalyses the reaction Ca(2+)(in) = Ca(2+)(out). It carries out the reaction Mg(2+)(in) = Mg(2+)(out). The enzyme catalyses Na(+)(in) = Na(+)(out). The catalysed reaction is K(+)(in) = K(+)(out). Functionally, calcium-permeable, non-selective cation channel with an outward rectification. Seems to be regulated, at least in part, by IGF1, PDGF and neuropeptide head activator. May transduce physical stimuli in mast cells. Activated by temperatures higher than 52 degrees Celsius; is not activated by vanilloids and acidic pH. The polypeptide is Transient receptor potential cation channel subfamily V member 2 (Trpv2) (Mus musculus (Mouse)).